The sequence spans 150 residues: Large ribosomal subunit protein bL9 (150 aa).

It belongs to the bacterial ribosomal protein bL9 family.

In terms of biological role, binds to the 23S rRNA. This is Large ribosomal subunit protein bL9 from Cupriavidus taiwanensis (strain DSM 17343 / BCRC 17206 / CCUG 44338 / CIP 107171 / LMG 19424 / R1) (Ralstonia taiwanensis (strain LMG 19424)).